A 287-amino-acid polypeptide reads, in one-letter code: ATP synthase gamma chain (287 aa).

Belongs to the ATPase gamma chain family. In terms of assembly, F-type ATPases have 2 components, CF(1) - the catalytic core - and CF(0) - the membrane proton channel. CF(1) has five subunits: alpha(3), beta(3), gamma(1), delta(1), epsilon(1). CF(0) has three main subunits: a, b and c.

It is found in the cell inner membrane. Its function is as follows. Produces ATP from ADP in the presence of a proton gradient across the membrane. The gamma chain is believed to be important in regulating ATPase activity and the flow of protons through the CF(0) complex. The protein is ATP synthase gamma chain of Yersinia enterocolitica serotype O:8 / biotype 1B (strain NCTC 13174 / 8081).